A 428-amino-acid polypeptide reads, in one-letter code: Kynureninase (428 aa).

Residues Thr-104, Thr-105, 132–135, Asp-213, His-216, and Tyr-238 contribute to the pyridoxal 5'-phosphate site; that span reads FPSD. At Lys-239 the chain carries N6-(pyridoxal phosphate)lysine. Trp-267 and Thr-295 together coordinate pyridoxal 5'-phosphate.

This sequence belongs to the kynureninase family. As to quaternary structure, homodimer. Pyridoxal 5'-phosphate serves as cofactor.

The catalysed reaction is L-kynurenine + H2O = anthranilate + L-alanine + H(+). It catalyses the reaction 3-hydroxy-L-kynurenine + H2O = 3-hydroxyanthranilate + L-alanine + H(+). Its pathway is amino-acid degradation; L-kynurenine degradation; L-alanine and anthranilate from L-kynurenine: step 1/1. It participates in cofactor biosynthesis; NAD(+) biosynthesis; quinolinate from L-kynurenine: step 2/3. Functionally, catalyzes the cleavage of L-kynurenine (L-Kyn) and L-3-hydroxykynurenine (L-3OHKyn) into anthranilic acid (AA) and 3-hydroxyanthranilic acid (3-OHAA), respectively. The chain is Kynureninase from Bacillus cereus (strain ATCC 10987 / NRS 248).